Reading from the N-terminus, the 462-residue chain is Chromosomal replication initiator protein DnaA (462 aa).

Positions 1 to 83 (MSLSLWQQCL…LRFEVGSKPA (83 aa)) are domain I, interacts with DnaA modulators. Residues 83–125 (AARAHNNPVTASVSAPVAPVTRSAPMRPSWDNSPAQPELSYRS) are domain II. The segment at 104–125 (RSAPMRPSWDNSPAQPELSYRS) is disordered. The segment covering 112–125 (WDNSPAQPELSYRS) has biased composition (polar residues). The interval 126–342 (NVNPKHTFDN…GALNRVIANA (217 aa)) is domain III, AAA+ region. Positions 170, 172, 173, and 174 each coordinate ATP. Positions 343–462 (NFTGRAITID…FSNLIRTLSS (120 aa)) are domain IV, binds dsDNA.

Belongs to the DnaA family. As to quaternary structure, oligomerizes as a right-handed, spiral filament on DNA at oriC.

The protein resides in the cytoplasm. Its function is as follows. Plays an essential role in the initiation and regulation of chromosomal replication. ATP-DnaA binds to the origin of replication (oriC) to initiate formation of the DNA replication initiation complex once per cell cycle. Binds the DnaA box (a 9 base pair repeat at the origin) and separates the double-stranded (ds)DNA. Forms a right-handed helical filament on oriC DNA; dsDNA binds to the exterior of the filament while single-stranded (ss)DNA is stabiized in the filament's interior. The ATP-DnaA-oriC complex binds and stabilizes one strand of the AT-rich DNA unwinding element (DUE), permitting loading of DNA polymerase. After initiation quickly degrades to an ADP-DnaA complex that is not apt for DNA replication. Binds acidic phospholipids. The polypeptide is Chromosomal replication initiator protein DnaA (Yersinia pseudotuberculosis serotype O:1b (strain IP 31758)).